The following is a 195-amino-acid chain: CASP-like protein 1E2 (195 aa).

The Cytoplasmic segment spans residues 1-29 (MEVESKTSFGGMESKSKEVKVVTGGKLRP). The chain crosses the membrane as a helical span at residues 30–50 (FDLVLRVVALALTLVAAVLLG). At 51 to 82 (VDKQTKVVSLQLLPTLPPMDVPVTAKWRYLSA) the chain is on the extracellular side. The chain crosses the membrane as a helical span at residues 83 to 103 (FVYFVVSNAIACSYAALSLLL). Topologically, residues 104–122 (SVGNSKGNKGLGLAITVMD) are cytoplasmic. A helical membrane pass occupies residues 123 to 143 (LVMVALLFSSNGAAGAIGLMG). Topologically, residues 144 to 165 (YEGNSRVRWGKVCNVFGKFCNQ) are extracellular. Residues 166–186 (VAVALGLSFFGGLAFFLLVVM) traverse the membrane as a helical segment. Residues 187–195 (AAFALNKRH) lie on the Cytoplasmic side of the membrane.

This sequence belongs to the Casparian strip membrane proteins (CASP) family. In terms of assembly, homodimer and heterodimers.

The protein localises to the cell membrane. This Vitis vinifera (Grape) protein is CASP-like protein 1E2.